A 461-amino-acid polypeptide reads, in one-letter code: Homogentisate 1,2-dioxygenase (461 aa).

Fe cation is bound by residues His341, Glu347, and His377.

It belongs to the homogentisate dioxygenase family. Fe cation is required as a cofactor.

The enzyme catalyses homogentisate + O2 = 4-maleylacetoacetate + H(+). Its pathway is amino-acid degradation; L-phenylalanine degradation; acetoacetate and fumarate from L-phenylalanine: step 4/6. The sequence is that of Homogentisate 1,2-dioxygenase (HGO) from Arabidopsis thaliana (Mouse-ear cress).